Here is a 490-residue protein sequence, read N- to C-terminus: Ribosome biogenesis protein YTM1 (490 aa).

A disordered region spans residues 1-22; the sequence is MDGLEDGPLDASTATSQKPQRQ. The interval 23–104 is ubiquitin-like (UBL) domain; it reads VRLKLTSRHE…ETTLDVEYVR (82 aa). WD repeat units follow at residues 116–168, 175–213, 224–263, 298–338, 340–379, 385–425, and 449–487; these read LHDD…IALS, GHTA…DGFS, GHKG…NPAA, SHTA…LVDT, TASH…TTVS, GHTN…TDKD, and GEGV…PNGG. The disordered stretch occupies residues 255–286; it reads TRKSENPAAPESLLPSNTSRSSKRRKLNSSVS.

This sequence belongs to the WD repeat WDR12/YTM1 family. Component of the NOP7 complex, composed of ERB1, NOP7 and YTM1. The complex is held together by ERB1, which interacts with NOP7 via its N-terminal domain and with YTM1 via a high-affinity interaction between the seven-bladed beta-propeller domains of the 2 proteins. The NOP7 complex associates with the 66S pre-ribosome. Interacts (via UBL domain) with MDN1 (via VWFA/MIDAS domain).

The protein localises to the nucleus. The protein resides in the nucleolus. Its subcellular location is the nucleoplasm. In terms of biological role, component of the NOP7 complex, which is required for maturation of the 25S and 5.8S ribosomal RNAs and formation of the 60S ribosome. This Ajellomyces capsulatus (strain NAm1 / WU24) (Darling's disease fungus) protein is Ribosome biogenesis protein YTM1.